We begin with the raw amino-acid sequence, 397 residues long: Acetate kinase 2 (397 aa).

Asn-10 provides a ligand contact to Mg(2+). ATP is bound at residue Lys-17. Arg-90 provides a ligand contact to substrate. The active-site Proton donor/acceptor is the Asp-147. ATP contacts are provided by residues 207–211 (HLGNG), 281–283 (DAR), and 329–333 (GIGEN). Position 385 (Glu-385) interacts with Mg(2+).

It belongs to the acetokinase family. Homodimer. The cofactor is Mg(2+). Mn(2+) is required as a cofactor.

Its subcellular location is the cytoplasm. The catalysed reaction is acetate + ATP = acetyl phosphate + ADP. The protein operates within metabolic intermediate biosynthesis; acetyl-CoA biosynthesis; acetyl-CoA from acetate: step 1/2. Functionally, catalyzes the formation of acetyl phosphate from acetate and ATP. Can also catalyze the reverse reaction. The sequence is that of Acetate kinase 2 from Vibrio vulnificus (strain CMCP6).